The following is a 387-amino-acid chain: 3-ketoacyl-CoA thiolase (387 aa).

Catalysis depends on Cys-91, which acts as the Acyl-thioester intermediate. Active-site proton acceptor residues include His-343 and Cys-373.

This sequence belongs to the thiolase-like superfamily. Thiolase family. As to quaternary structure, heterotetramer of two alpha chains (FadB) and two beta chains (FadA).

It is found in the cytoplasm. The catalysed reaction is an acyl-CoA + acetyl-CoA = a 3-oxoacyl-CoA + CoA. Its pathway is lipid metabolism; fatty acid beta-oxidation. In terms of biological role, catalyzes the final step of fatty acid oxidation in which acetyl-CoA is released and the CoA ester of a fatty acid two carbons shorter is formed. In Escherichia coli O6:K15:H31 (strain 536 / UPEC), this protein is 3-ketoacyl-CoA thiolase.